The chain runs to 438 residues: Xylose isomerase (438 aa).

Catalysis depends on residues His-100 and Asp-103. Mg(2+)-binding residues include Glu-231, Glu-267, His-270, Asp-295, Asp-306, Asp-308, and Asp-338.

Belongs to the xylose isomerase family. In terms of assembly, homotetramer. The cofactor is Mg(2+).

The protein localises to the cytoplasm. The catalysed reaction is alpha-D-xylose = alpha-D-xylulofuranose. The chain is Xylose isomerase from Thermoanaerobacter sp. (strain X514).